The primary structure comprises 458 residues: Hyaluronidase conohyal-P1 (458 aa).

The first 18 residues, 1-18 (MRVVVVVTGLVVVVVATA), serve as a signal peptide directing secretion. Residues 24–47 (HDVKSASSPLSSSSVYQGSSGDDC) are disordered. The span at 28–43 (SASSPLSSSSVYQGSS) shows a compositional bias: low complexity. A disulfide bridge links cysteine 68 with cysteine 342. N-linked (GlcNAc...) asparagine glycans are attached at residues asparagine 106 and asparagine 141. Glutamate 151 serves as the catalytic Proton donor. Residues asparagine 261, asparagine 337, and asparagine 359 are each glycosylated (N-linked (GlcNAc...) asparagine). Residues 363 to 434 (VMADCSTTLC…VRPSRCHKQQ (72 aa)) enclose the EGF-like domain. Disulfide bonds link cysteine 367–cysteine 378, cysteine 372–cysteine 411, and cysteine 413–cysteine 422.

It belongs to the glycosyl hydrolase 56 family. As to expression, expressed by the venom duct.

The protein localises to the secreted. The enzyme catalyses Random hydrolysis of (1-&gt;4)-linkages between N-acetyl-beta-D-glucosamine and D-glucuronate residues in hyaluronate.. In terms of biological role, hyaluronidase catalyzes the hydrolysis of hyaluronic acid (HA), an anionic, nonsulfated glycosaminoglycan distributed widely throughout connective, epithelial, and neural tissues. In venom, they are known to enhance diffusion of the venom by degrading the extracellular matrix. The polypeptide is Hyaluronidase conohyal-P1 (Conus purpurascens (Purple cone)).